A 106-amino-acid polypeptide reads, in one-letter code: Large ribosomal subunit protein eL42 (106 aa).

Belongs to the eukaryotic ribosomal protein eL42 family.

The protein is Large ribosomal subunit protein eL42 (RPL44) of Yarrowia lipolytica (strain CLIB 122 / E 150) (Yeast).